Reading from the N-terminus, the 334-residue chain is Glycerol-3-phosphate dehydrogenase [NAD(P)+] (334 aa).

3 residues coordinate NADPH: serine 13, phenylalanine 14, and lysine 108. Residues lysine 108, glycine 137, and threonine 139 each coordinate sn-glycerol 3-phosphate. NADPH is bound at residue alanine 141. The sn-glycerol 3-phosphate site is built by lysine 193, aspartate 246, serine 256, arginine 257, and asparagine 258. Catalysis depends on lysine 193, which acts as the Proton acceptor. Arginine 257 contacts NADPH. 2 residues coordinate NADPH: valine 281 and glutamate 283.

It belongs to the NAD-dependent glycerol-3-phosphate dehydrogenase family.

It localises to the cytoplasm. It catalyses the reaction sn-glycerol 3-phosphate + NAD(+) = dihydroxyacetone phosphate + NADH + H(+). The enzyme catalyses sn-glycerol 3-phosphate + NADP(+) = dihydroxyacetone phosphate + NADPH + H(+). It functions in the pathway membrane lipid metabolism; glycerophospholipid metabolism. In terms of biological role, catalyzes the reduction of the glycolytic intermediate dihydroxyacetone phosphate (DHAP) to sn-glycerol 3-phosphate (G3P), the key precursor for phospholipid synthesis. The polypeptide is Glycerol-3-phosphate dehydrogenase [NAD(P)+] (Bartonella tribocorum (strain CIP 105476 / IBS 506)).